Consider the following 361-residue polypeptide: NudC domain-containing protein 3 (361 aa).

A compositionally biased stretch (basic and acidic residues) spans 87–97; it reads KIRRKEEEEAK. The disordered stretch occupies residues 87–106; sequence KIRRKEEEEAKTVSAAAAEK. Phosphoserine is present on S146. Residues 185–277 form the CS domain; the sequence is AVRENYTWSQ…VGEYWWNAIL (93 aa). A phosphoserine mark is found at S340 and S355.

This Pongo abelii (Sumatran orangutan) protein is NudC domain-containing protein 3 (NUDCD3).